The sequence spans 293 residues: N(1)-aminopropylagmatine ureohydrolase (293 aa).

Mn(2+) is bound by residues H105, D128, H130, D132, D210, and D212.

Belongs to the arginase family. It depends on Mn(2+) as a cofactor.

The enzyme catalyses N(1)-(3-aminopropyl)agmatine + H2O = urea + spermidine. It participates in amine and polyamine biosynthesis; spermidine biosynthesis. In terms of biological role, involved in the biosynthesis of polyamines which are thought to support the growth of thermophilic microorganisms under high-temperature conditions. It seems that long-chain and branched-chain of polyamines effectively stabilize DNA and RNA, respectively. Catalyzes the decarboxylation of N1-(3-aminopropyl)agmatine to yield spermidine and urea. Does not act on agmatine. The chain is N(1)-aminopropylagmatine ureohydrolase from Thermus thermophilus (strain ATCC BAA-163 / DSM 7039 / HB27).